Here is a 5762-residue protein sequence, read N- to C-terminus: Mucin-5B (5762 aa).

Positions 1 to 25 (MGAPSACRTLVLALAAMLVVPQAET) are cleaved as a signal peptide. A disordered region spans residues 27 to 50 (GPVEPSWENAGHTMDGGAPTSSPT). In terms of domain architecture, VWFD 1 spans 75–245 (RVCSTWGDFH…KLDGPTEQCP (171 aa)). Disulfide bonds link Cys-77–Cys-207 and Cys-99–Cys-244. A glycan (N-linked (GlcNAc...) asparagine) is linked at Asn-145. Position 194 (Glu-194) interacts with Cu(2+). Residues Asn-201 and Asn-254 are each glycosylated (N-linked (GlcNAc...) asparagine). Cu(2+) is bound by residues His-311 and His-358. The region spanning 329 to 385 (CPLNMQHQECGSPCTDTCSNPQRAQLCEDHCVDGCFCPPGTVLDDITHSGCLPLGQC) is the TIL 1 domain. Asn-401 carries N-linked (GlcNAc...) asparagine glycosylation. The VWFD 2 domain occupies 423–598 (GTCSVQGGAH…NTWKAQAACA (176 aa)). Intrachain disulfides connect Cys-425–Cys-562, Cys-447–Cys-597, and Cys-469–Cys-477. Asn-515 carries N-linked (GlcNAc...) asparagine glycosylation. TIL domains lie at 695–752 (CPKS…AQEC) and 805–855 (NSSA…EEDC). A glycan (N-linked (GlcNAc...) asparagine) is linked at Asn-805. In terms of domain architecture, VWFC 1 spans 855–927 (CPCVHNEATY…EYILAQDYCG (73 aa)). In terms of domain architecture, VWFD 3 spans 893–1062 (GTCVAYGDGH…NSWKLSPSCP (170 aa)). Disulfide bonds link Cys-895–Cys-1026, Cys-917–Cys-1061, Cys-926–Cys-1023, and Cys-944–Cys-951. Asn-929 carries N-linked (GlcNAc...) asparagine glycosylation. Residues Asn-1276 and Asn-1292 are each glycosylated (N-linked (GlcNAc...) asparagine). The Cys-rich subdomain 1 repeat unit spans residues 1333-1432 (CVREVCRWSS…RVLCCEYVPC (100 aa)). A 7 X Cys-rich subdomain repeats region spans residues 1333–4228 (CVREVCRWSS…RVFCCNYGHC (2896 aa)). Trp-1340 carries C-linked (Man) tryptophan glycosylation. 2 disordered regions span residues 1437–1462 (APGT…QTTA) and 1480–1502 (LTSQ…GTTT). The segment covering 1450–1462 (TEPAVPTPTQTTA) has biased composition (low complexity). One copy of the Cys-rich subdomain 2 repeat lies at 1503–1604 (CQPRCQWTEW…VLCCSDDHCR (102 aa)). Trp-1509 carries C-linked (Man) tryptophan glycosylation. An N-linked (GlcNAc...) asparagine glycan is attached at Asn-1556. The interval 1607–1783 (ATTPPPTTEL…NTTTSQGTTR (177 aa)) is disordered. Over residues 1614-1624 (TELETATTTTT) the composition is skewed to low complexity. 2 stretches are compositionally biased toward polar residues: residues 1625–1638 (QALF…SSPG) and 1645–1662 (ASTT…SPRY). Residues 1663-1684 (TSTLGTATTGGPTTPAGSTEPT) are compositionally biased toward low complexity. The segment covering 1689–1706 (ATSTLPTRSALPGTTGSL) has biased composition (polar residues). Composition is skewed to low complexity over residues 1739–1756 (EPLT…LSTS) and 1765–1777 (TETT…NTTT). Residue Asn-1774 is glycosylated (N-linked (GlcNAc...) asparagine). The stretch at 1784-1885 (CQPKCEWTEW…VLCCDDYSHC (102 aa)) is one Cys-rich subdomain 3 repeat. Residue Trp-1790 is glycosylated (C-linked (Man) tryptophan). Low complexity predominate over residues 1890–1987 (ATSSTATPSS…TSVTPIPSSS (98 aa)). 4 disordered regions span residues 1890–2019 (ATSS…TAHT), 2031–2100 (GATG…GTTH), 2114–2211 (TGSM…HTVR), and 2242–2302 (TGTT…SSPT). The interval 1890 to 2199 (ATSSTATPSS…VPNTMATTHG (310 aa)) is 11 X approximate tandem repeats, Ser/Thr-rich. Positions 1988-1997 (LGTTWTRLSQ) are enriched in polar residues. Low complexity predominate over residues 1998-2019 (TTTPTATMSTATPSSTPETAHT). The span at 2114–2181 (TGSMATPSSS…TSNTVTPSSA (68 aa)) shows a compositional bias: low complexity. A compositionally biased stretch (polar residues) spans 2182 to 2199 (LGTTHTPPVPNTMATTHG). The stretch at 2313–2414 (GCEPQCAWSE…RVFCCNYGHC (102 aa)) is one Cys-rich subdomain 4 repeat. Residue Trp-2320 is glycosylated (C-linked (Man) tryptophan). Residues 2419 to 2756 (ATSSTAMPSS…VPNTTATTHG (338 aa)) form an 11 X approximate tandem repeats, Ser/Thr-rich region. 3 disordered regions span residues 2443–2462 (ATTT…PGTT), 2473–2522 (TVTV…ATAL), and 2556–2861 (TTPT…PTSA). Positions 2556 to 2738 (TTPTATMSTA…TSSTVTPSSA (183 aa)) are enriched in low complexity. Positions 2739 to 2786 (LGTTHTPPVPNTTATTHGRSLSPSSPHTVRTAWTSATSGTLGTTHITE) are enriched in polar residues. N-linked (GlcNAc...) asparagine glycosylation occurs at Asn-2749. Low complexity predominate over residues 2787–2861 (PSTGTSHTPA…TLLPSSPTSA (75 aa)). Residues 2854 to 2886 (LPSSPTSAPITTVVTMGCEPQCAWSEWLDYSYP) form an HAT 1 repeat. The Cys-rich subdomain 5 repeat unit spans residues 2871 to 2971 (CEPQCAWSEW…RVFCCNYGHC (101 aa)). C-linked (Man) tryptophan glycosylation occurs at Trp-2877. Residues 2976–3456 (ATSSTATPSS…VPNTTATTHG (481 aa)) are 17 X approximate tandem repeats, Ser/Thr-rich. Low complexity-rich tracts occupy residues 3001-3017 (TTTA…STPG) and 3026-3049 (TSTA…RTAT). Disordered regions lie at residues 3001–3049 (TTTA…RTAT), 3256–3357 (TTPT…GTTH), 3371–3469 (TGSM…TVRT), and 3481–3561 (TTHI…PTSA). Residues 3371–3438 (TGSMATPSSS…TSSTVTPSSA (68 aa)) are compositionally biased toward low complexity. Polar residues predominate over residues 3439–3456 (LGTTHTPPVPNTTATTHG). An N-linked (GlcNAc...) asparagine glycan is attached at Asn-3449. Residues 3487-3561 (PSTVTSHTPA…TLLPSSPTSA (75 aa)) show a composition bias toward low complexity. The stretch at 3554–3586 (LPSSPTSAPITTVVTTGCEPQCAWSEWLDYSYP) is one HAT 2 repeat. A Cys-rich subdomain 6 repeat occupies 3571-3671 (CEPQCAWSEW…RVFCCNYGHC (101 aa)). The C-linked (Man) tryptophan glycan is linked to Trp-3577. The 11 X approximate tandem repeats, Ser/Thr-rich stretch occupies residues 3676-4013 (ATSSTATPSS…VPNTTATTHG (338 aa)). Disordered stretches follow at residues 3699 to 3779 (TATT…ATAL), 3813 to 3917 (TTPT…HTPT), and 3956 to 4118 (ATGS…PTSA). The segment covering 3956 to 3995 (ATGSTTNPSSTPGTTPIPPVLTTTATTPAATSSTVTPSSA) has biased composition (low complexity). The span at 3996 to 4043 (LGTTHTPPVPNTTATTHGRSLSPSSPHTVRTAWTSATSGTLGTTHITE) shows a compositional bias: polar residues. Asn-4006 carries an N-linked (GlcNAc...) asparagine glycan. Residues 4044–4118 (PSTGTSHTPA…TLLPSSPTSA (75 aa)) are compositionally biased toward low complexity. The stretch at 4111–4143 (LPSSPTSAPITTVVTTGCEPQCAWSEWLDYSYP) is one HAT 3 repeat. Residues 4128-4228 (CEPQCAWSEW…RVFCCNYGHC (101 aa)) form a Cys-rich subdomain 7 repeat. Trp-4134 carries C-linked (Man) tryptophan glycosylation. Positions 4233–4879 (ATSSTAMPSS…TLGTAHTPKV (647 aa)) are 23 X approximate tandem repeats, Ser/Thr-rich. Composition is skewed to low complexity over residues 4259 to 4274 (TTAS…STPG) and 4283 to 4389 (TSPA…PGTT). Disordered regions lie at residues 4259 to 4389 (TTAS…PGTT), 4428 to 4447 (ATTT…PGTT), 4458 to 4527 (TVTV…AIPS), and 4541 to 4750 (TTPT…ATSF). 7 N-linked (GlcNAc...) asparagine glycosylation sites follow: Asn-4804, Asn-4960, Asn-5017, Asn-5024, Asn-5046, Asn-5096, and Asn-5111. The VWFD 4 domain maps to 5073–5261 (CICSMWGGSH…VPDSRKDGCW (189 aa)). 3 disulfides stabilise this stretch: Cys-5075-Cys-5221, Cys-5097-Cys-5260, and Cys-5121-Cys-5132. The N-linked (GlcNAc...) asparagine glycan is linked to Asn-5215. One can recognise a VWFC 2 domain in the interval 5412-5484 (CPCVGPDGFP…NPCCPETVCV (73 aa)). N-linked (GlcNAc...) asparagine glycans are attached at residues Asn-5486, Asn-5526, Asn-5565, Asn-5566, Asn-5602, Asn-5612, Asn-5663, Asn-5677, and Asn-5721. The VWFC 3 domain occupies 5521-5587 (QLCSYNGTFY…VAGQCCGECV (67 aa)). Intrachain disulfides connect Cys-5653–Cys-5705, Cys-5672–Cys-5719, Cys-5681–Cys-5735, and Cys-5685–Cys-5737. In terms of domain architecture, CTCK spans 5653 to 5742 (CEEDSCQVRI…DECGCTPFCV (90 aa)).

Homomultimer; disulfide-linked. The N- and C-terminus mediate their assembly into higher order structures to form filaments. The CTCK domains of two polypeptides associate in the endoplasmic reticulum to generate intermolecularly disulfide-bonded dimers. These dimers progress to the Golgi apparatus, which is a more acidic environment than the endoplasmic reticulum. Under acidic conditions, the N-termini form non-covalent intermolecular interactions that juxtapose assemblies from different CTCK-linked dimers to produce long, disulfide-linked polymers that remain highly compact until secretion. Post-translationally, highly glycosylated. C-, N- and O-glycosylated. C-mannosylated in the Cys-rich subdomains probably on the first Trp residue of the WXXW motif. Highly O-glycosylated in the Ser/Thr-rich tandem repeat (TR) region. The repeat region is about 59% O-glycosylated with a high abundance of NeuAc(2)Hex(1)HexNac1-ol. In terms of tissue distribution, expressed on surface airway epithelia. Expressed mainly in mucous cells of submucosal glands of airway tissues. Highly expressed in the sublingual gland. Also found in submaxillary glands, endocervix, gall bladder, and pancreas.

The protein localises to the secreted. In terms of biological role, gel-forming mucin that is thought to contribute to the lubricating and viscoelastic properties of whole saliva and cervical mucus. The sequence is that of Mucin-5B (MUC5B) from Homo sapiens (Human).